The chain runs to 336 residues: Cinnamoyl-CoA reductase 2 (336 aa).

Residues 21–27, arginine 46, lysine 52, 72–73, 92–94, tyrosine 165, lysine 169, 192–195, and serine 207 contribute to the NADP(+) site; these read GAGGFIA, DL, TAS, and PVVV. Cysteine 158 and cysteine 166 are joined by a disulfide. Lysine 169 acts as the Proton donor in catalysis.

This sequence belongs to the NAD(P)-dependent epimerase/dehydratase family. Dihydroflavonol-4-reductase subfamily. In terms of processing, the formation of a reversible disulfide bond reduces activity by perturbing the positioning of nearby catalytic residues. Mainly expressed in roots and stems, especially at the second internode and, to a lower extent, in leaves and flowers. Localized in vascular elements, with weaker expression in the interfascicular (xylem fiber) region.

The protein resides in the cytoplasm. The enzyme catalyses (E)-coniferaldehyde + NADP(+) + CoA = (E)-feruloyl-CoA + NADPH + H(+). It catalyses the reaction (E)-4-coumaraldehyde + NADP(+) + CoA = (E)-4-coumaroyl-CoA + NADPH + H(+). It carries out the reaction (E)-sinapaldehyde + NADP(+) + CoA = (E)-sinapoyl-CoA + NADPH + H(+). The catalysed reaction is (E)-cinnamaldehyde + NADP(+) + CoA = (E)-cinnamoyl-CoA + NADPH + H(+). The enzyme catalyses (E)-caffeyl aldehyde + NADP(+) + CoA = (E)-caffeoyl-CoA + NADPH + H(+). Its pathway is aromatic compound metabolism; phenylpropanoid biosynthesis. In terms of biological role, involved in the latter stages of lignin biosynthesis. Catalyzes one of the last steps of monolignol biosynthesis, the conversion of cinnamoyl-CoAs into their corresponding cinnamaldehydes. Mediates the conversion of caffeoyl-CoA and coumaroyl-CoA to caffaldehyde and coumaraldehyde, respectively. Also active, with a lower efficiency, toward feruloyl-CoA and sinapoyl-CoA. Involved in the production of floral volatile phenylpropanoids in flowers of fragrant cultivars from cinnamic acid, a common precursor with the anthocyanin biosynthesis pathway involved in flower pigmentation. This Medicago truncatula (Barrel medic) protein is Cinnamoyl-CoA reductase 2.